Here is a 574-residue protein sequence, read N- to C-terminus: MRYALERFITDIKDAIAATGKVPVDLIEITTPKPNIPADRTFVTFKAAKVLGVDPAKLAAELAATIAPPPDSLIGEVTATGAFLNFSLHPQRLAAAVLNEIETAGEAYGTVADGAGRTVVIDYSSPNIAKRMHVGHIRSTIIGQALVHIFRALGYRVIGDNHLGDWGTQFGIILAAMQRYGRPQNEGEAAMAELEALYARYNAEMKDDPALEDEARRWSLALERGDPEARSLWQWCVDLSLRAAQRNYDRLGIRFDYAYGESFYEAMLPGVIEEALRSEAAFRDVDGAVVAELDKLPKFIIQRSDGGTVYMTRDIATIKFRLQEFSPSHIIYVVDARQELHFRQLFAIVRAMGYARDVELVHVPFGVITTPDGQPLSTKKGNMVYLEALLDDAVARARALVDAKSADLPLEERAAIAEAVGIGAVIYNDLYQDPRRNITLDWDRMLSIEGNSAAYLQYSHARCRSILRRAADEGVALAEADLTLLTHPSEQRLIRHLARLPEAVREAGARYAPFVIADWCYTTAREFGIFFEQCPVLRAETPALRAARLQLVAATANALRNGLALLGIQAPERM.

The short motif at 126–136 (PNIAKRMHVGH) is the 'HIGH' region element.

It belongs to the class-I aminoacyl-tRNA synthetase family. As to quaternary structure, monomer.

The protein localises to the cytoplasm. The catalysed reaction is tRNA(Arg) + L-arginine + ATP = L-arginyl-tRNA(Arg) + AMP + diphosphate. The sequence is that of Arginine--tRNA ligase from Chloroflexus aggregans (strain MD-66 / DSM 9485).